The following is a 500-amino-acid chain: Glycerol kinase (500 aa).

Threonine 11 serves as a coordination point for ADP. ATP contacts are provided by threonine 11, threonine 12, and serine 13. Position 11 (threonine 11) interacts with sn-glycerol 3-phosphate. ADP is bound at residue arginine 15. The sn-glycerol 3-phosphate site is built by arginine 81, glutamate 82, tyrosine 133, and aspartate 242. Glycerol is bound by residues arginine 81, glutamate 82, tyrosine 133, aspartate 242, and glutamine 243. Positions 264 and 307 each coordinate ADP. ATP-binding residues include threonine 264, glycine 307, glutamine 311, and glycine 411. Glycine 411 provides a ligand contact to ADP.

The protein belongs to the FGGY kinase family.

It carries out the reaction glycerol + ATP = sn-glycerol 3-phosphate + ADP + H(+). It participates in polyol metabolism; glycerol degradation via glycerol kinase pathway; sn-glycerol 3-phosphate from glycerol: step 1/1. Inhibited by fructose 1,6-bisphosphate (FBP). Functionally, key enzyme in the regulation of glycerol uptake and metabolism. Catalyzes the phosphorylation of glycerol to yield sn-glycerol 3-phosphate. The sequence is that of Glycerol kinase from Rhodopseudomonas palustris (strain BisA53).